Here is a 211-residue protein sequence, read N- to C-terminus: NADH-quinone oxidoreductase subunit A (211 aa).

Helical transmembrane passes span 7-27 (WSALAFILAAIGLVIFMLVVP), 61-81 (FYLVAIFFVIFDLEALYLYAY), and 88-108 (VGWIGYATALIFVVDLLIGLI).

This sequence belongs to the complex I subunit 3 family. In terms of assembly, NDH-1 is composed of 14 different subunits. Subunits NuoA, H, J, K, L, M, N constitute the membrane sector of the complex.

Its subcellular location is the cell inner membrane. The catalysed reaction is a quinone + NADH + 5 H(+)(in) = a quinol + NAD(+) + 4 H(+)(out). Functionally, NDH-1 shuttles electrons from NADH, via FMN and iron-sulfur (Fe-S) centers, to quinones in the respiratory chain. The immediate electron acceptor for the enzyme in this species is believed to be ubiquinone. Couples the redox reaction to proton translocation (for every two electrons transferred, four hydrogen ions are translocated across the cytoplasmic membrane), and thus conserves the redox energy in a proton gradient. This is NADH-quinone oxidoreductase subunit A from Psychrobacter sp. (strain PRwf-1).